Consider the following 174-residue polypeptide: MSKETLKANLREIPDFPIPGILFYDVTTLFKNPECLQEILDTLYEMYKDKGITKVVGIESRGFIMGGALAARLGAGFVMARKPGKLPAEVVEETYAKEYGTDTIQIHKDAIDENDVVLLHDDLLATGGTMAATHRLVQRCGAKKIFINFIIELGGLNGRKAFPEDITVDTLLTL.

The protein belongs to the purine/pyrimidine phosphoribosyltransferase family. In terms of assembly, homodimer.

The protein localises to the cytoplasm. It catalyses the reaction AMP + diphosphate = 5-phospho-alpha-D-ribose 1-diphosphate + adenine. The protein operates within purine metabolism; AMP biosynthesis via salvage pathway; AMP from adenine: step 1/1. Catalyzes a salvage reaction resulting in the formation of AMP, that is energically less costly than de novo synthesis. This is Adenine phosphoribosyltransferase from Phocaeicola vulgatus (strain ATCC 8482 / DSM 1447 / JCM 5826 / CCUG 4940 / NBRC 14291 / NCTC 11154) (Bacteroides vulgatus).